We begin with the raw amino-acid sequence, 631 residues long: Phosphomethylpyrimidine synthase (631 aa).

Residues asparagine 239, methionine 268, tyrosine 297, histidine 333, 353-355, 394-397, and glutamate 433 each bind substrate; these read SRG and DGLR. Histidine 437 is a binding site for Zn(2+). Tyrosine 460 is a substrate binding site. Residue histidine 501 coordinates Zn(2+). Cysteine 581, cysteine 584, and cysteine 589 together coordinate [4Fe-4S] cluster.

The protein belongs to the ThiC family. Homodimer. [4Fe-4S] cluster is required as a cofactor.

It carries out the reaction 5-amino-1-(5-phospho-beta-D-ribosyl)imidazole + S-adenosyl-L-methionine = 4-amino-2-methyl-5-(phosphooxymethyl)pyrimidine + CO + 5'-deoxyadenosine + formate + L-methionine + 3 H(+). The protein operates within cofactor biosynthesis; thiamine diphosphate biosynthesis. Functionally, catalyzes the synthesis of the hydroxymethylpyrimidine phosphate (HMP-P) moiety of thiamine from aminoimidazole ribotide (AIR) in a radical S-adenosyl-L-methionine (SAM)-dependent reaction. In Shigella sonnei (strain Ss046), this protein is Phosphomethylpyrimidine synthase.